The following is a 339-amino-acid chain: 4-hydroxy-2-oxovalerate aldolase (339 aa).

Positions 7–257 (IRIMDTTLRD…QVGVDLYKIM (251 aa)) constitute a Pyruvate carboxyltransferase domain. 15–16 (RD) contacts substrate. Aspartate 16 contributes to the Mn(2+) binding site. Histidine 19 acts as the Proton acceptor in catalysis. Residues serine 169 and histidine 196 each coordinate substrate. The Mn(2+) site is built by histidine 196 and histidine 198. Tyrosine 286 lines the substrate pocket.

The protein belongs to the 4-hydroxy-2-oxovalerate aldolase family.

It catalyses the reaction (S)-4-hydroxy-2-oxopentanoate = acetaldehyde + pyruvate. The chain is 4-hydroxy-2-oxovalerate aldolase from Pelotomaculum thermopropionicum (strain DSM 13744 / JCM 10971 / SI).